The chain runs to 286 residues: L-cysteine S-thiosulfotransferase subunit SoxA (286 aa).

An N-terminal signal peptide occupies residues 1 to 27 (MKKTIQRGLFTGALVLMTAMTAKPANA). The cysteines at positions 106 and 137 are disulfide-linked. Residues 180 to 286 (DAYMKGKKFF…LKYNGPASRK (107 aa)) enclose the Cytochrome c domain. Residues cysteine 200 and histidine 204 each contribute to the heme site. Arginine 243 contacts substrate. Cysteine 247 is a heme binding site. The active-site Cysteine persulfide intermediate is the cysteine 247.

It belongs to the SoxA family. In terms of assembly, heterodimer of SoxA and SoxX. The SoxAX complex interacts with CT1020, SoxAX-binding protein SaxB (SoxK); this interaction seems to be between SoxA and CT1020 and stimulates catalytic activity of the SoxAX complex. Heme is required as a cofactor. Post-translationally, cysteine persulfide at Cys-247.

The protein localises to the periplasm. It carries out the reaction L-cysteinyl-[SoxY protein] + thiosulfate + 2 Fe(III)-[cytochrome c] = S-sulfosulfanyl-L-cysteinyl-[SoxY protein] + 2 Fe(II)-[cytochrome c] + 2 H(+). The enzyme catalyses S-sulfanyl-L-cysteinyl-[SoxY protein] + thiosulfate + 2 Fe(III)-[cytochrome c] = S-(2-sulfodisulfanyl)-L-cysteinyl-[SoxY protein] + 2 Fe(II)-[cytochrome c] + 2 H(+). Its function is as follows. C-type monoheme cytochrome, which is part of the SoxAX cytochrome complex involved in sulfur oxidation. The SoxAX complex catalyzes the formation of a heterodisulfide bond between the conserved cysteine residue on a sulfur carrier SoxYZ complex subunit SoxY and thiosulfate or other inorganic sulfur substrates. This leads to the liberation of two electrons, which may be transferred from the SoxAX complex to another cytochrome c and which then may be used for reductive CO(2) fixation. This is L-cysteine S-thiosulfotransferase subunit SoxA from Chlorobaculum tepidum (strain ATCC 49652 / DSM 12025 / NBRC 103806 / TLS) (Chlorobium tepidum).